An 85-amino-acid polypeptide reads, in one-letter code: Small ribosomal subunit protein bS18 (85 aa).

The protein belongs to the bacterial ribosomal protein bS18 family. In terms of assembly, part of the 30S ribosomal subunit. Forms a tight heterodimer with protein bS6.

Functionally, binds as a heterodimer with protein bS6 to the central domain of the 16S rRNA, where it helps stabilize the platform of the 30S subunit. The sequence is that of Small ribosomal subunit protein bS18 from Hyphomonas neptunium (strain ATCC 15444).